Here is a 451-residue protein sequence, read N- to C-terminus: Phosphoglucosamine mutase (451 aa).

Catalysis depends on S104, which acts as the Phosphoserine intermediate. S104, D249, D251, and D253 together coordinate Mg(2+). S104 is subject to Phosphoserine.

This sequence belongs to the phosphohexose mutase family. Requires Mg(2+) as cofactor. Post-translationally, activated by phosphorylation.

The enzyme catalyses alpha-D-glucosamine 1-phosphate = D-glucosamine 6-phosphate. In terms of biological role, catalyzes the conversion of glucosamine-6-phosphate to glucosamine-1-phosphate. This is Phosphoglucosamine mutase from Psychrobacter sp. (strain PRwf-1).